The primary structure comprises 183 residues: Inner membrane-spanning protein YciB (183 aa).

5 helical membrane-spanning segments follow: residues 10–30 (LVIF…GALI), 50–70 (MHLI…VFHD), 72–92 (AFIK…LAVS), 118–138 (VTWY…YVAF), and 148–168 (FKVF…VIYL).

The protein belongs to the YciB family.

The protein localises to the cell inner membrane. Plays a role in cell envelope biogenesis, maintenance of cell envelope integrity and membrane homeostasis. The polypeptide is Inner membrane-spanning protein YciB (Shewanella sediminis (strain HAW-EB3)).